The primary structure comprises 371 residues: Aminomethyltransferase (371 aa).

This sequence belongs to the GcvT family. As to quaternary structure, the glycine cleavage system is composed of four proteins: P, T, L and H.

The enzyme catalyses N(6)-[(R)-S(8)-aminomethyldihydrolipoyl]-L-lysyl-[protein] + (6S)-5,6,7,8-tetrahydrofolate = N(6)-[(R)-dihydrolipoyl]-L-lysyl-[protein] + (6R)-5,10-methylene-5,6,7,8-tetrahydrofolate + NH4(+). Functionally, the glycine cleavage system catalyzes the degradation of glycine. The sequence is that of Aminomethyltransferase from Leptospira borgpetersenii serovar Hardjo-bovis (strain JB197).